The following is a 140-amino-acid chain: Mite allergen Der p 21.0101 (140 aa).

The signal sequence occupies residues 1–19 (MKFIITLFAAIVMAAAVSG). Immunodominant conformational IgE-binding epitope regions lie at residues 20–53 (FIVG…EKGL) and 108–140 (YNYE…DEYY).

This sequence belongs to the mite group 5 allergen family. Monomer. Homodimer. In terms of tissue distribution, expressed in the epithelium, lumen and microvilli of the midgut, and in feces.

Its subcellular location is the cytoplasm. The protein localises to the endoplasmic reticulum. It localises to the vesicle. It is found in the secreted. The chain is Mite allergen Der p 21.0101 from Dermatophagoides pteronyssinus (European house dust mite).